Here is a 336-residue protein sequence, read N- to C-terminus: Quinolinate synthase (336 aa).

Iminosuccinate-binding residues include H25 and S42. Residue C86 coordinates [4Fe-4S] cluster. Iminosuccinate contacts are provided by residues 117–119 (YIN) and S138. C198 provides a ligand contact to [4Fe-4S] cluster. Iminosuccinate is bound by residues 224-226 (HPE) and T241. C288 is a binding site for [4Fe-4S] cluster.

The protein belongs to the quinolinate synthase family. Type 3 subfamily. [4Fe-4S] cluster is required as a cofactor.

The protein resides in the cytoplasm. It carries out the reaction iminosuccinate + dihydroxyacetone phosphate = quinolinate + phosphate + 2 H2O + H(+). It functions in the pathway cofactor biosynthesis; NAD(+) biosynthesis; quinolinate from iminoaspartate: step 1/1. Its function is as follows. Catalyzes the condensation of iminoaspartate with dihydroxyacetone phosphate to form quinolinate. The sequence is that of Quinolinate synthase from Helicobacter pylori (strain HPAG1).